The sequence spans 285 residues: TATA box-binding protein-associated factor RNA polymerase I subunit D (285 aa).

Disordered regions lie at residues 1–49 (MAQS…RIPT) and 85–112 (KKKR…TRNI). Positions 21–39 (GNQSDDSSNSSLFKTQCVP) are enriched in polar residues. At S24 the chain carries Phosphoserine. Over residues 85–104 (KKKRKKRKKRKYKPKLRRQG) the composition is skewed to basic residues. Position 134 is a phosphoserine (S134). The disordered stretch occupies residues 193 to 219 (HKYMDDDGPLSPIEEPSTEDEATDPQS). Position 229 is a phosphoserine (S229). 2 stretches are compositionally biased toward basic and acidic residues: residues 242 to 264 (NLEQ…KDAT) and 273 to 285 (KGGE…SEVS). Residues 242–285 (NLEQGKIKKESAFSKKSKAKDATQRGNRRSWKGGEHACLHSEVS) form a disordered region.

As to quaternary structure, component of the transcription factor SL1/TIF-IB complex, composed of TBP and at least TAF1A, TAF1B, TAF1C and TAF1D. Interacts with UBTF.

It localises to the nucleus. Its function is as follows. Component of the transcription factor SL1/TIF-IB complex, which is involved in the assembly of the PIC (preinitiation complex) during RNA polymerase I-dependent transcription. The rate of PIC formation probably is primarily dependent on the rate of association of SL1/TIF-IB with the rDNA promoter. SL1/TIF-IB is involved in stabilization of nucleolar transcription factor 1/UBTF on rDNA. Formation of SL1/TIF-IB excludes the association of TBP with TFIID subunits. The protein is TATA box-binding protein-associated factor RNA polymerase I subunit D (Taf1d) of Rattus norvegicus (Rat).